The chain runs to 123 residues: Ribonuclease P protein component 2 (123 aa).

This sequence belongs to the eukaryotic/archaeal RNase P protein component 2 family. As to quaternary structure, consists of a catalytic RNA component and at least 4-5 protein subunits.

The protein localises to the cytoplasm. The catalysed reaction is Endonucleolytic cleavage of RNA, removing 5'-extranucleotides from tRNA precursor.. Functionally, part of ribonuclease P, a protein complex that generates mature tRNA molecules by cleaving their 5'-ends. The chain is Ribonuclease P protein component 2 from Sulfurisphaera tokodaii (strain DSM 16993 / JCM 10545 / NBRC 100140 / 7) (Sulfolobus tokodaii).